A 63-amino-acid polypeptide reads, in one-letter code: Cytochrome b-c1 complex subunit 9 (63 aa).

The Mitochondrial matrix portion of the chain corresponds to 2–21; that stretch reads AAATLTSKLYSLLFRRTSTF. A helical membrane pass occupies residues 22–47; it reads ALTIIVGVMFFERAFDQGADAIYDHI. Residues 48–63 lie on the Mitochondrial intermembrane side of the membrane; that stretch reads NEGKLWKHIKHKYENK.

It belongs to the UQCR10/QCR9 family. In terms of assembly, component of the ubiquinol-cytochrome c oxidoreductase (cytochrome b-c1 complex, complex III, CIII), a multisubunit enzyme composed of 11 subunits. The complex is composed of 3 respiratory subunits cytochrome b, cytochrome c1 and Rieske protein UQCRFS1, 2 core protein subunits UQCRC1/QCR1 and UQCRC2/QCR2, and 6 low-molecular weight protein subunits UQCRH/QCR6, UQCRB/QCR7, UQCRQ/QCR8, UQCR10/QCR9, UQCR11/QCR10 and subunit 9, the cleavage product of Rieske protein UQCRFS1. The complex exists as an obligatory dimer and forms supercomplexes (SCs) in the inner mitochondrial membrane with NADH-ubiquinone oxidoreductase (complex I, CI) and cytochrome c oxidase (complex IV, CIV), resulting in different assemblies (supercomplex SCI(1)III(2)IV(1) and megacomplex MCI(2)III(2)IV(2)). Interacts with STMP1.

It localises to the mitochondrion inner membrane. Its function is as follows. Component of the ubiquinol-cytochrome c oxidoreductase, a multisubunit transmembrane complex that is part of the mitochondrial electron transport chain which drives oxidative phosphorylation. The respiratory chain contains 3 multisubunit complexes succinate dehydrogenase (complex II, CII), ubiquinol-cytochrome c oxidoreductase (cytochrome b-c1 complex, complex III, CIII) and cytochrome c oxidase (complex IV, CIV), that cooperate to transfer electrons derived from NADH and succinate to molecular oxygen, creating an electrochemical gradient over the inner membrane that drives transmembrane transport and the ATP synthase. The cytochrome b-c1 complex catalyzes electron transfer from ubiquinol to cytochrome c, linking this redox reaction to translocation of protons across the mitochondrial inner membrane, with protons being carried across the membrane as hydrogens on the quinol. In the process called Q cycle, 2 protons are consumed from the matrix, 4 protons are released into the intermembrane space and 2 electrons are passed to cytochrome c. This Homo sapiens (Human) protein is Cytochrome b-c1 complex subunit 9 (UQCR10).